Reading from the N-terminus, the 3365-residue chain is Probable serine/threonine-protein kinase roco9 (3365 aa).

Disordered regions lie at residues 1-177, 397-497, 944-985, 1044-1098, and 1261-1301; these read MTSI…KSSK, ESTE…QPPQ, PIKK…GFLS, IHQQ…NNKI, and QNNL…ISKG. Positions 8 to 27 are enriched in basic and acidic residues; that stretch reads FDKKSKRSNEDTGEKEETKK. Low complexity-rich tracts occupy residues 51 to 84, 100 to 116, 137 to 169, and 397 to 415; these read LQQL…SLNT, STNS…STRS, SQTS…TVKT, and ESTE…TLEP. A Rho-GAP domain is found at 243–437; that stretch reads TPLYSLIKRQ…RLPQQSSDDN (195 aa). The span at 421–434 shows a compositional bias: polar residues; that stretch reads PLSTSTQRLPQQSS. Composition is skewed to low complexity over residues 435–445, 457–489, 959–974, 1044–1096, and 1262–1301; these read DDNSNNDNNNK, NNDN…QPKQ, SSPL…IPSK, IHQQ…NNNN, and NNLN…ISKG. The region spanning 804 to 1484 is the Myotubularin phosphatase domain; that stretch reads IWDIYSPLIE…DQIILWSSFF (681 aa). LRR repeat units lie at residues 1510 to 1526, 1527 to 1549, 1550 to 1572, 1576 to 1599, 1600 to 1622, 1624 to 1645, 1646 to 1668, 1670 to 1691, 1697 to 1720, 1722 to 1743, 1744 to 1770, 1772 to 1789, 1790 to 1812, 1814 to 1835, 1837 to 1861, and 1863 to 1887; these read SQKL…LSYF, STLT…IILL, SNLT…LLKL, KLKL…IYTL, STLT…ISKM, QLKC…LSLC, VGLE…FFKL, SLRM…KLDD, MNEI…MFEM, SLIH…LLDN, LVNL…LFKL, VLDL…HAML, PSLK…DFNL, LLSE…IGTK, LSLT…ALLK, and LKSL…DAIL. Positions 1932-1947 are enriched in basic and acidic residues; it reads SKEREKEKEKEKEKEK. Disordered stretches follow at residues 1932 to 1963, 2190 to 2389, 2507 to 2567, and 2674 to 2704; these read SKER…DKDK, NNNN…NNGS, APST…LQTP, and SNQQ…TSIN. Low complexity-rich tracts occupy residues 2190–2205, 2216–2389, 2522–2567, and 2676–2688; these read NNNN…NNNN, SINN…NNGS, NNTS…LQTP, and QQQQ…STQH. In terms of domain architecture, Protein kinase spans 3008–3269; the sequence is ELDPNPIGEG…KKLEEIELIL (262 aa). Residues 3014 to 3022 and Lys3035 contribute to the ATP site; that span reads IGEGGTATV. The active-site Proton acceptor is Asp3132. Residues 3311–3333 show a composition bias toward low complexity; that stretch reads QQQKQQQLQQQKQSPKQLQQQKP. The tract at residues 3311 to 3365 is disordered; the sequence is QQQKQQQLQQQKQSPKQLQQQKPLPTPPKQLSNNDSTPTKPLDDSSDSSSEDSNN. Residues 3354 to 3365 show a composition bias toward acidic residues; sequence DSSDSSSEDSNN.

The protein belongs to the protein kinase superfamily. TKL Ser/Thr protein kinase family. ROCO subfamily.

It catalyses the reaction L-seryl-[protein] + ATP = O-phospho-L-seryl-[protein] + ADP + H(+). The enzyme catalyses L-threonyl-[protein] + ATP = O-phospho-L-threonyl-[protein] + ADP + H(+). The sequence is that of Probable serine/threonine-protein kinase roco9 (roco9) from Dictyostelium discoideum (Social amoeba).